The following is a 148-amino-acid chain: MGPEEKTIMTERSAAVFIQAWWRGMLVRRTLLHAALRAWIIQCWWRQVLEKLLAKRRRMVLEFYVQQEWAAVRLQSWVRMWCVRQRYCRLLNAVRIIQVYWRWHSCHSRVFIEGHYELKENQLNIQLEISLGLQACKVQQCIPLPLKE.

2 consecutive IQ domains span residues 11 to 40 (ERSAAVFIQAWWRGMLVRRTLLHAALRAWI) and 67 to 96 (QEWAAVRLQSWVRMWCVRQRYCRLLNAVRI).

The protein is IQ domain-containing protein F5 (IQCF5) of Homo sapiens (Human).